We begin with the raw amino-acid sequence, 301 residues long: Heme A synthase (301 aa).

Residues 1–7 (MHKGLKR) are Cytoplasmic-facing. The chain crosses the membrane as a helical span at residues 8 to 28 (LGVITSLGVLLVLIQGALVTN). The Extracellular segment spans residues 29–56 (TGSGEGCGQTWPLCFGQVIPLDPPPETV). A disulfide bridge connects residues Cys35 and Cys42. The chain crosses the membrane as a helical span at residues 57 to 77 (IEFSHRLVAGIVGMLVILMAI). Residue Glu58 is part of the active site. His61 contacts heme o. Topologically, residues 78–92 (WSWRRLKHMPETRFL) are cytoplasmic. Residues 93 to 113 (AVISVFMIIFQGLLGAGAVVF) form a helical membrane-spanning segment. Residues 114–117 (GQSD) are Extracellular-facing. Residues 118–138 (LIMALHFGFSALSFASVVLLT) form a helical membrane-spanning segment. Position 123 (His123) interacts with heme o. At 139–159 (RLAFEDSNPQKQYAPIVSKAY) the chain is on the cytoplasmic side. Residues 160–180 (KGYVIFVAIYSYVAIYTGAYV) traverse the membrane as a helical segment. Residues 181-215 (KHTNATLACSGFPLCNGQWVPDVFTEAIGVQLLHR) lie on the Extracellular side of the membrane. The cysteines at positions 189 and 195 are disulfide-linked. His214 provides a ligand contact to heme b. Residues 216 to 236 (SAAILLSLLLLVLFIWTVKTF) traverse the membrane as a helical segment. Over 237–240 (RASR) the chain is Cytoplasmic. A helical membrane pass occupies residues 241-261 (VLVVCASLAMLLVIGQAASGV). The Extracellular portion of the chain corresponds to 262–274 (AVVLTYNATLTLG). The helical transmembrane segment at 275–295 (IFHALLISLLFTLLCYMVMLV) threads the bilayer. His277 contributes to the heme b binding site. Residues 296 to 301 (TRHKAK) lie on the Cytoplasmic side of the membrane.

Belongs to the COX15/CtaA family. Type 1 subfamily. As to quaternary structure, interacts with CtaB. Requires heme b as cofactor.

Its subcellular location is the cell membrane. It catalyses the reaction Fe(II)-heme o + 2 A + H2O = Fe(II)-heme a + 2 AH2. Its pathway is porphyrin-containing compound metabolism; heme A biosynthesis; heme A from heme O: step 1/1. Functionally, catalyzes the conversion of heme O to heme A by two successive hydroxylations of the methyl group at C8. The first hydroxylation forms heme I, the second hydroxylation results in an unstable dihydroxymethyl group, which spontaneously dehydrates, resulting in the formyl group of heme A. The sequence is that of Heme A synthase from Shouchella clausii (strain KSM-K16) (Alkalihalobacillus clausii).